Here is a 100-residue protein sequence, read N- to C-terminus: Aspartyl/glutamyl-tRNA(Asn/Gln) amidotransferase subunit C (100 aa).

This sequence belongs to the GatC family. Heterotrimer of A, B and C subunits.

It carries out the reaction L-glutamyl-tRNA(Gln) + L-glutamine + ATP + H2O = L-glutaminyl-tRNA(Gln) + L-glutamate + ADP + phosphate + H(+). The catalysed reaction is L-aspartyl-tRNA(Asn) + L-glutamine + ATP + H2O = L-asparaginyl-tRNA(Asn) + L-glutamate + ADP + phosphate + 2 H(+). In terms of biological role, allows the formation of correctly charged Asn-tRNA(Asn) or Gln-tRNA(Gln) through the transamidation of misacylated Asp-tRNA(Asn) or Glu-tRNA(Gln) in organisms which lack either or both of asparaginyl-tRNA or glutaminyl-tRNA synthetases. The reaction takes place in the presence of glutamine and ATP through an activated phospho-Asp-tRNA(Asn) or phospho-Glu-tRNA(Gln). This is Aspartyl/glutamyl-tRNA(Asn/Gln) amidotransferase subunit C from Streptococcus pneumoniae (strain JJA).